Consider the following 119-residue polypeptide: Phosphoribosyl-AMP cyclohydrolase (119 aa).

Position 71 (Asp71) interacts with Mg(2+). Zn(2+) is bound at residue Cys72. Positions 73 and 75 each coordinate Mg(2+). Cys90 and Cys97 together coordinate Zn(2+).

Belongs to the PRA-CH family. Homodimer. Mg(2+) is required as a cofactor. Requires Zn(2+) as cofactor.

The protein resides in the cytoplasm. The catalysed reaction is 1-(5-phospho-beta-D-ribosyl)-5'-AMP + H2O = 1-(5-phospho-beta-D-ribosyl)-5-[(5-phospho-beta-D-ribosylamino)methylideneamino]imidazole-4-carboxamide. It functions in the pathway amino-acid biosynthesis; L-histidine biosynthesis; L-histidine from 5-phospho-alpha-D-ribose 1-diphosphate: step 3/9. In terms of biological role, catalyzes the hydrolysis of the adenine ring of phosphoribosyl-AMP. This is Phosphoribosyl-AMP cyclohydrolase from Brucella abortus (strain 2308).